The sequence spans 330 residues: Cyclin-dependent kinase 7 (330 aa).

A Protein kinase domain is found at 5–289 (YDTIKHLGEG…CTQSLQMEYF (285 aa)). ATP is bound by residues 11 to 19 (LGEGQFANV) and lysine 34. Aspartate 130 (proton acceptor) is an active-site residue. The residue at position 163 (threonine 163) is a Phosphothreonine. A disordered region spans residues 305 to 330 (KKQQPQKRSRRLDDDGTRPVRRLNFD). The span at 315–330 (RLDDDGTRPVRRLNFD) shows a compositional bias: basic and acidic residues.

It belongs to the protein kinase superfamily. CMGC Ser/Thr protein kinase family. CDC2/CDKX subfamily. In terms of assembly, catalytic component which, in association with cyclin H (cyh-1) and mat1, is likely to form the CAK complex.

The enzyme catalyses L-seryl-[protein] + ATP = O-phospho-L-seryl-[protein] + ADP + H(+). The catalysed reaction is L-threonyl-[protein] + ATP = O-phospho-L-threonyl-[protein] + ADP + H(+). It catalyses the reaction [DNA-directed RNA polymerase] + ATP = phospho-[DNA-directed RNA polymerase] + ADP + H(+). Serine/threonine kinase involved in cell cycle control and in RNA polymerase II-mediated RNA transcription. Required for maintaining chromosome ploidy. May phosphorylate the large subunit of RNA polymerase II, ama-1. The sequence is that of Cyclin-dependent kinase 7 from Caenorhabditis elegans.